The sequence spans 322 residues: Putative nickel/cobalt efflux system HI_1248 (322 aa).

6 helical membrane passes run 7–27, 54–74, 100–120, 137–157, 228–248, and 294–314; these read GLVL…WFFL, AGTT…LGPG, LSSL…VVVL, TALL…LRAY, IFVL…LAVL, and LIAG…TTIS.

Belongs to the NiCoT transporter (TC 2.A.52) family.

It is found in the cell membrane. Efflux system for nickel and cobalt. The polypeptide is Putative nickel/cobalt efflux system HI_1248 (Haemophilus influenzae (strain ATCC 51907 / DSM 11121 / KW20 / Rd)).